Here is a 763-residue protein sequence, read N- to C-terminus: MSELLSVALFLASVLIYAWKAGRNTWWFAATLTVLGLFVILNITLYASDYFTGDGINDAVLYTLTNSLTGAGVGKYILPGIGIALALVAVFGALGWILRRRRHHPHHVGYSLLALLLALGSVDASPAFRQITELVKSQMRDGDPDFAVYYKEPAKTIPNPKLNLVYIYGESLERTYFDNDAFPNLTPELGALKNEGLDFSHTMQLPGTDYTIAGMVASQCGIPLFAPFEGNASASVSSFFPQNICLGDILKNSGYQNYFVQGANLRFAGKDVFLKSHGFDHLYGAEELKTVVADPSYRNDWGFYDDTVLDEAWKKFEALSRSGQRFSLFTLTVDTHHPDGFISRTCNRKRYDYDGKPNQSFSAVSCSQENIAEFINKIKASPWFKDTVIVVSSDHLAMNNTAWKYLNKQDRNNLFFILRGDKPQQETLAVKRNTMDNGATVLDILGGDNFIGLGRSSLSGQSLSEVFLNVKEKVLAMKPDIIRLWNFPKEIKDFTVDRDKNMIAFSGSHFRLPLLLRVSDKRVEPLPESEYSAPLRFQLADFAPRDNFVWIDRCYKMAQLWAPALALSTDWCVSQGQLGGQQTVQHVDKAQWKGKTAFKETVIDVTRYQGNVDTLKIVDNDIRYKADSFIFNVAGAPEEVKQFSGISRPESWGRWSNAQLGDEVKIEYKAPLPKKFDLVITAKAFGDNANRPIPVRVGNEEQTLVLGHDVSTITLHFNNPTDANTLVIAPPAPVSTNEGNILGHSPRKLGIGMVEIKVVNVES.

4 helical membrane passes run 1–21 (MSEL…AWKA), 26–46 (WWFA…ITLY), 77–97 (ILPG…LGWI), and 108–128 (VGYS…SPAF).

The protein belongs to the OpgB family.

The protein localises to the cell inner membrane. The enzyme catalyses a phosphatidylglycerol + a membrane-derived-oligosaccharide D-glucose = a 1,2-diacyl-sn-glycerol + a membrane-derived-oligosaccharide 6-(glycerophospho)-D-glucose.. It participates in glycan metabolism; osmoregulated periplasmic glucan (OPG) biosynthesis. Transfers a phosphoglycerol residue from phosphatidylglycerol to the membrane-bound nascent glucan backbones. This Salmonella paratyphi B (strain ATCC BAA-1250 / SPB7) protein is Phosphoglycerol transferase I.